A 292-amino-acid chain; its full sequence is 33 kDa chaperonin (292 aa).

2 disulfides stabilise this stretch: C238/C240 and C271/C274.

The protein belongs to the HSP33 family. In terms of processing, under oxidizing conditions two disulfide bonds are formed involving the reactive cysteines. Under reducing conditions zinc is bound to the reactive cysteines and the protein is inactive.

It is found in the cytoplasm. Its function is as follows. Redox regulated molecular chaperone. Protects both thermally unfolding and oxidatively damaged proteins from irreversible aggregation. Plays an important role in the bacterial defense system toward oxidative stress. This chain is 33 kDa chaperonin, found in Alkaliphilus metalliredigens (strain QYMF).